The chain runs to 256 residues: Extracellular serine-rich protein ARB_03024 (256 aa).

The N-terminal stretch at 1 to 19 is a signal peptide; it reads MVATKSVLSAVALAGVAAA. The disordered stretch occupies residues 135–235; it reads KIVPQSGSPT…TPTASPGAAA (101 aa). Residues 149 to 159 show a composition bias toward gly residues; the sequence is GTLGGSGGSGG. Composition is skewed to low complexity over residues 160–204 and 215–235; these read SSSS…QSTP and PSATGSGSHSSTPTASPGAAA. The GPI-anchor amidated alanine moiety is linked to residue A233. Positions 234 to 256 are cleaved as a propeptide — removed in mature form; the sequence is AAGLKGSAVLAGVVALGAWIGLL.

The protein localises to the cell membrane. It localises to the secreted. This is Extracellular serine-rich protein ARB_03024 from Arthroderma benhamiae (strain ATCC MYA-4681 / CBS 112371) (Trichophyton mentagrophytes).